The sequence spans 428 residues: 3-phosphoshikimate 1-carboxyvinyltransferase (428 aa).

Residues lysine 21, serine 22, and arginine 26 each coordinate 3-phosphoshikimate. Lysine 21 serves as a coordination point for phosphoenolpyruvate. Phosphoenolpyruvate-binding residues include glycine 91 and arginine 119. Residues serine 164, glutamine 166, aspartate 313, and lysine 340 each coordinate 3-phosphoshikimate. Glutamine 166 lines the phosphoenolpyruvate pocket. Aspartate 313 acts as the Proton acceptor in catalysis. Phosphoenolpyruvate contacts are provided by arginine 344 and arginine 386.

The protein belongs to the EPSP synthase family. In terms of assembly, monomer.

The protein localises to the cytoplasm. It catalyses the reaction 3-phosphoshikimate + phosphoenolpyruvate = 5-O-(1-carboxyvinyl)-3-phosphoshikimate + phosphate. Its pathway is metabolic intermediate biosynthesis; chorismate biosynthesis; chorismate from D-erythrose 4-phosphate and phosphoenolpyruvate: step 6/7. Its function is as follows. Catalyzes the transfer of the enolpyruvyl moiety of phosphoenolpyruvate (PEP) to the 5-hydroxyl of shikimate-3-phosphate (S3P) to produce enolpyruvyl shikimate-3-phosphate and inorganic phosphate. The sequence is that of 3-phosphoshikimate 1-carboxyvinyltransferase from Campylobacter jejuni subsp. doylei (strain ATCC BAA-1458 / RM4099 / 269.97).